A 249-amino-acid polypeptide reads, in one-letter code: MRILIANDDGVTAPGIAALYDALADHADCVVIAPDQDKSGASSSLTLERPLHPQRLDNGFISLNGTPTDCVHLGLNGLLEELPDMVVSGINLGANLGDDVLYSGTVAAAIEGRFLKGPAFAFSLVSRLTDNLPTAMHFARLLVSAHERLAVPPRTVLNVNIPNLPLDRVRGIQLTRLGHRARAAAPVKVVNPRGKEGYWIAAAGDAEDGGPGTDFHAVMQGYVSITPLQLDRTFHEAFGGLDEWLGGLT.

A divalent metal cation contacts are provided by D8, D9, S39, and N91.

The protein belongs to the SurE nucleotidase family. The cofactor is a divalent metal cation.

The protein localises to the cytoplasm. The catalysed reaction is a ribonucleoside 5'-phosphate + H2O = a ribonucleoside + phosphate. Its function is as follows. Nucleotidase that shows phosphatase activity on nucleoside 5'-monophosphates. This chain is 5'-nucleotidase SurE, found in Pseudomonas aeruginosa (strain LESB58).